Here is a 246-residue protein sequence, read N- to C-terminus: Uridylate kinase (246 aa).

19–22 provides a ligand contact to ATP; that stretch reads KISG. A UMP-binding site is contributed by Gly-61. Residues Gly-62 and Arg-66 each coordinate ATP. UMP-binding positions include Asp-81 and 142–149; that span reads TGNPFFTT. ATP contacts are provided by Thr-169, Gln-170, Tyr-175, and Asp-178.

The protein belongs to the UMP kinase family. As to quaternary structure, homohexamer.

The protein localises to the cytoplasm. It carries out the reaction UMP + ATP = UDP + ADP. The protein operates within pyrimidine metabolism; CTP biosynthesis via de novo pathway; UDP from UMP (UMPK route): step 1/1. Its activity is regulated as follows. Inhibited by UTP. In terms of biological role, catalyzes the reversible phosphorylation of UMP to UDP. This chain is Uridylate kinase, found in Wolbachia sp. subsp. Brugia malayi (strain TRS).